A 193-amino-acid polypeptide reads, in one-letter code: ATP synthase subunit b 1 (193 aa).

A disordered region spans residues 13–32 (PAVTGGDTHSGTGVPAEAHG). The chain crosses the membrane as a helical span at residues 40-60 (ATFPSQLLWLAITFGLFYLFL).

The protein belongs to the ATPase B chain family. In terms of assembly, F-type ATPases have 2 components, F(1) - the catalytic core - and F(0) - the membrane proton channel. F(1) has five subunits: alpha(3), beta(3), gamma(1), delta(1), epsilon(1). F(0) has three main subunits: a(1), b(2) and c(10-14). The alpha and beta chains form an alternating ring which encloses part of the gamma chain. F(1) is attached to F(0) by a central stalk formed by the gamma and epsilon chains, while a peripheral stalk is formed by the delta and b chains.

It localises to the cell inner membrane. Functionally, f(1)F(0) ATP synthase produces ATP from ADP in the presence of a proton or sodium gradient. F-type ATPases consist of two structural domains, F(1) containing the extramembraneous catalytic core and F(0) containing the membrane proton channel, linked together by a central stalk and a peripheral stalk. During catalysis, ATP synthesis in the catalytic domain of F(1) is coupled via a rotary mechanism of the central stalk subunits to proton translocation. Component of the F(0) channel, it forms part of the peripheral stalk, linking F(1) to F(0). This is ATP synthase subunit b 1 from Mesorhizobium japonicum (strain LMG 29417 / CECT 9101 / MAFF 303099) (Mesorhizobium loti (strain MAFF 303099)).